The chain runs to 581 residues: NADH-quinone oxidoreductase subunit C/D (581 aa).

The segment at 1-172 (MSASELVTEL…PLFNMTASLF (172 aa)) is NADH dehydrogenase I subunit C. The interval 196–581 (ELMILNYGPH…IDYVMSDVDR (386 aa)) is NADH dehydrogenase I subunit D.

This sequence in the N-terminal section; belongs to the complex I 30 kDa subunit family. It in the C-terminal section; belongs to the complex I 49 kDa subunit family. As to quaternary structure, NDH-1 is composed of 13 different subunits. Subunits NuoB, CD, E, F, and G constitute the peripheral sector of the complex.

It is found in the cell inner membrane. It carries out the reaction a quinone + NADH + 5 H(+)(in) = a quinol + NAD(+) + 4 H(+)(out). Functionally, NDH-1 shuttles electrons from NADH, via FMN and iron-sulfur (Fe-S) centers, to quinones in the respiratory chain. The immediate electron acceptor for the enzyme in this species is believed to be ubiquinone. Couples the redox reaction to proton translocation (for every two electrons transferred, four hydrogen ions are translocated across the cytoplasmic membrane), and thus conserves the redox energy in a proton gradient. The polypeptide is NADH-quinone oxidoreductase subunit C/D (Rhodopseudomonas palustris (strain TIE-1)).